Reading from the N-terminus, the 216-residue chain is Peptide methionine sulfoxide reductase MsrA (216 aa).

Residue Cys-54 is part of the active site.

This sequence belongs to the MsrA Met sulfoxide reductase family.

It catalyses the reaction L-methionyl-[protein] + [thioredoxin]-disulfide + H2O = L-methionyl-(S)-S-oxide-[protein] + [thioredoxin]-dithiol. It carries out the reaction [thioredoxin]-disulfide + L-methionine + H2O = L-methionine (S)-S-oxide + [thioredoxin]-dithiol. Has an important function as a repair enzyme for proteins that have been inactivated by oxidation. Catalyzes the reversible oxidation-reduction of methionine sulfoxide in proteins to methionine. The chain is Peptide methionine sulfoxide reductase MsrA from Xylella fastidiosa (strain Temecula1 / ATCC 700964).